The chain runs to 330 residues: MSLTELDDGLVRRMAMGAVFSDFGGKIHSVGFHRTDDLLVTSSEDDSLRLFDIANAKQLKITYHKKHGTDRVCFTHHPSSLICSSRYNLESTGESLRYLSMYDNRILRYFKGHKDRVVSLCMSPINDSFMSGSLDRSVRLWDLRVNACQGILHLRGRPAVAYDQQGLVFAIAMEGGAVKLFDSRCYDKGPFDTFLVGGDTAEVNDIKFSNDGKSMLLTTTNNNIYVLDAYRGEKKCGFSLEPSQGTPIEATFTPDGKYVLSGSGDGTLHAWNIENPSEVARWENNIGVVSCLKWAPRRAMFVAASTVLTFWIPNDGESPAPADPPTDQQQ.

6 WD repeats span residues 22 to 61, 112 to 151, 153 to 191, 198 to 237, 242 to 281, and 284 to 323; these read DFGG…QLKI, GHKD…CQGI, HLRG…KGPF, GDTA…KKCG, PSQG…EVAR, and NNIG…APAD.

This sequence belongs to the WD repeat SWD2 family. As to expression, expressed in the shoot apical meristem (SAM), embryos, seedlings, cotyledons, leaves primordia, young leaves and roots.

The protein resides in the nucleus. Component of a chromatin regulatory complex involved in regulating chromatin structure in the nucleus. Promotes flowering under long days (LD) via the regulation of bolting. In Arabidopsis thaliana (Mouse-ear cress), this protein is Protein ANTHESIS POMOTING FACTOR 1.